The chain runs to 260 residues: Putative ABC transporter ATP-binding protein PYRAB01300 (260 aa).

In terms of domain architecture, ABC transporter spans 2-234 (IEFKDVWFWY…DLRNFSLVEP (233 aa)). 34–41 (GPNGSGKT) provides a ligand contact to ATP.

Belongs to the ABC transporter superfamily.

It localises to the cell membrane. In terms of biological role, probably part of an ABC transporter complex. Responsible for energy coupling to the transport system. The protein is Putative ABC transporter ATP-binding protein PYRAB01300 of Pyrococcus abyssi (strain GE5 / Orsay).